Reading from the N-terminus, the 431-residue chain is Glutamyl-tRNA(Gln) amidotransferase subunit A (431 aa).

Active-site charge relay system residues include Lys55 and Ser130. Residue Ser154 is the Acyl-ester intermediate of the active site.

The protein belongs to the amidase family. GatA subfamily. Heterotrimer of A, B and C subunits.

The catalysed reaction is L-glutamyl-tRNA(Gln) + L-glutamine + ATP + H2O = L-glutaminyl-tRNA(Gln) + L-glutamate + ADP + phosphate + H(+). In terms of biological role, allows the formation of correctly charged Gln-tRNA(Gln) through the transamidation of misacylated Glu-tRNA(Gln) in organisms which lack glutaminyl-tRNA synthetase. The reaction takes place in the presence of glutamine and ATP through an activated gamma-phospho-Glu-tRNA(Gln). The polypeptide is Glutamyl-tRNA(Gln) amidotransferase subunit A (Methanococcus maripaludis (strain C7 / ATCC BAA-1331)).